Reading from the N-terminus, the 75-residue chain is UPF0352 protein YejL (75 aa).

It belongs to the UPF0352 family.

This is UPF0352 protein YejL from Escherichia coli O127:H6 (strain E2348/69 / EPEC).